The primary structure comprises 336 residues: Methionine import ATP-binding protein MetN (336 aa).

The ABC transporter domain maps to 2 to 254 (IKIKNLKKYY…PNAKMKEFLG (253 aa)). 34 to 41 (GHSGAGKS) serves as a coordination point for ATP.

It belongs to the ABC transporter superfamily. Methionine importer (TC 3.A.1.24) family. As to quaternary structure, the complex is composed of two ATP-binding proteins (MetN), two transmembrane proteins (MetI) and a solute-binding protein (MetQ).

It localises to the cell inner membrane. The catalysed reaction is L-methionine(out) + ATP + H2O = L-methionine(in) + ADP + phosphate + H(+). It catalyses the reaction D-methionine(out) + ATP + H2O = D-methionine(in) + ADP + phosphate + H(+). Part of the ABC transporter complex MetNIQ involved in methionine import. Responsible for energy coupling to the transport system. This Campylobacter jejuni subsp. jejuni serotype O:2 (strain ATCC 700819 / NCTC 11168) protein is Methionine import ATP-binding protein MetN.